Reading from the N-terminus, the 562-residue chain is Potassium-transporting ATPase potassium-binding subunit (562 aa).

Transmembrane regions (helical) follow at residues 6-26 (FLLI…LGSF), 62-82 (YALA…ALLM), 132-152 (GLAV…FALI), 170-190 (VFRI…LFFV), 253-273 (FVQM…FGQV), 283-303 (LIWA…YAEL), 327-347 (FGIL…CGAV), 356-376 (ALGG…FGGV), 379-399 (GLYG…LMIG), 416-436 (MTAL…ALAI), 483-503 (LLLA…VLAI), and 526-546 (LFIG…FVPA).

It belongs to the KdpA family. As to quaternary structure, the system is composed of three essential subunits: KdpA, KdpB and KdpC.

It is found in the cell inner membrane. Functionally, part of the high-affinity ATP-driven potassium transport (or Kdp) system, which catalyzes the hydrolysis of ATP coupled with the electrogenic transport of potassium into the cytoplasm. This subunit binds the periplasmic potassium ions and delivers the ions to the membrane domain of KdpB through an intramembrane tunnel. This is Potassium-transporting ATPase potassium-binding subunit from Serratia proteamaculans (strain 568).